The primary structure comprises 631 residues: Occlusion-derived virus envelope protein E66 (631 aa).

It belongs to the baculoviridae E66 family.

The protein resides in the virion membrane. In terms of biological role, component of the polyhedra envelope. This Leucania separata nucleopolyhedrovirus (LsNPV) protein is Occlusion-derived virus envelope protein E66.